The sequence spans 427 residues: Peptidase B (427 aa).

Residues lysine 195 and aspartate 200 each coordinate Mn(2+). Residue lysine 207 is part of the active site. The Mn(2+) site is built by aspartate 218, aspartate 277, and glutamate 279. Arginine 281 is an active-site residue.

It belongs to the peptidase M17 family. In terms of assembly, homohexamer. Mn(2+) serves as cofactor.

It is found in the cytoplasm. It catalyses the reaction Release of an N-terminal amino acid, Xaa, from a peptide or arylamide. Xaa is preferably Glu or Asp but may be other amino acids, including Leu, Met, His, Cys and Gln.. Probably plays an important role in intracellular peptide degradation. In Shigella boydii serotype 18 (strain CDC 3083-94 / BS512), this protein is Peptidase B.